A 384-amino-acid chain; its full sequence is Galactokinase (384 aa).

Residue 34-37 (EHTD) participates in substrate binding. Residue 123–129 (SSGLSSS) participates in ATP binding. Residues Ser129 and Glu161 each coordinate Mg(2+). Asp173 (proton acceptor) is an active-site residue. A substrate-binding site is contributed by Tyr222.

Belongs to the GHMP kinase family. GalK subfamily.

The protein resides in the cytoplasm. It carries out the reaction alpha-D-galactose + ATP = alpha-D-galactose 1-phosphate + ADP + H(+). Its pathway is carbohydrate metabolism; galactose metabolism. Functionally, catalyzes the transfer of the gamma-phosphate of ATP to D-galactose to form alpha-D-galactose-1-phosphate (Gal-1-P). In Glaesserella parasuis serovar 5 (strain SH0165) (Haemophilus parasuis), this protein is Galactokinase.